We begin with the raw amino-acid sequence, 186 residues long: uncharacterized protein (186 aa).

The N-acetyltransferase domain occupies leucine 12–arginine 184.

This sequence belongs to the acetyltransferase family.

The protein resides in the cytoplasm. Its subcellular location is the nucleus. This is an uncharacterized protein from Schizosaccharomyces pombe (strain 972 / ATCC 24843) (Fission yeast).